A 459-amino-acid chain; its full sequence is Tryptophan synthase beta chain (459 aa).

Lys-121 bears the N6-(pyridoxal phosphate)lysine mark.

This sequence belongs to the TrpB family. In terms of assembly, tetramer of two alpha and two beta chains. Pyridoxal 5'-phosphate serves as cofactor.

The catalysed reaction is (1S,2R)-1-C-(indol-3-yl)glycerol 3-phosphate + L-serine = D-glyceraldehyde 3-phosphate + L-tryptophan + H2O. The protein operates within amino-acid biosynthesis; L-tryptophan biosynthesis; L-tryptophan from chorismate: step 5/5. Its function is as follows. The beta subunit is responsible for the synthesis of L-tryptophan from indole and L-serine. This chain is Tryptophan synthase beta chain (trpB), found in Pyrococcus horikoshii (strain ATCC 700860 / DSM 12428 / JCM 9974 / NBRC 100139 / OT-3).